A 394-amino-acid polypeptide reads, in one-letter code: GDNF family receptor alpha-like (394 aa).

Residues 1–19 (MLVFIFLAVRLSSENESSS) form the signal peptide. Topologically, residues 20–350 (QTNDCAYFMR…LTGFNSPFSG (331 aa)) are extracellular. N-linked (GlcNAc...) asparagine glycosylation is found at Asn-65, Asn-101, and Asn-115. Disulfide bonds link Cys-132–Cys-190, Cys-139–Cys-145, Cys-156–Cys-168, Cys-163–Cys-211, Cys-192–Cys-199, Cys-221–Cys-292, Cys-228–Cys-234, Cys-245–Cys-276, Cys-253–Cys-259, Cys-270–Cys-317, and Cys-294–Cys-305. The segment at 150–229 (ALYLKACTAN…TCLSVIHTCR (80 aa)) is required for interaction with GDF15. A helical membrane pass occupies residues 351–371 (ELIYVVVCMVVTSGILSLVML). Residues 372–394 (KLRIPSKKRDPAPIEIAGAVIIQ) are Cytoplasmic-facing.

The protein belongs to the GDNFR family. Interacts (via the extracellular domain) with GDF15 and RET; receptor of GDF15, mediates cellular signaling through interaction with RET after GDF15-binding. Interaction with RET requires previous GDF15-binding. Cleaved and inactivated by MMP14, inhibiting the GDF15-GFRAL aversive response. As to expression, expressed in the brainstem, restricted to cells in the area postrema and the immediately adjacent region of the nucleus tractus solitarius. Detected at low levels in testis.

The protein resides in the cell membrane. Brainstem-restricted receptor for GDF15 hormone, which triggers an aversive response, characterized by nausea, vomiting, and/or loss of appetite in response to various stresses. The aversive response is both required to reduce continuing exposure to those stresses at the time of exposure and to promote avoidance behavior in the future. The GDF15-GFRAL aversive response is triggered by stresses, such as anticancer drugs (camptothecin or cisplatin), cancers or drugs such as metformin. Upon interaction with its ligand, GDF15, mediates the GDF15-induced autophosphorylation and activation of the RET tyrosine kinase receptor, leading to activation of MAPK- and AKT- signaling pathways. Ligand-binding activates GFRAL-expressing neurons localized in the area postrema and nucleus tractus solitarius of the brainstem. The GDF15-GFRAL signal induces expression of genes involved in metabolism, such as lipid metabolism in adipose tissues. The protein is GDNF family receptor alpha-like of Rattus norvegicus (Rat).